A 156-amino-acid polypeptide reads, in one-letter code: Histone acetyltransferase HPA2 (156 aa).

The region spanning 9–156 (ITVRFVTEND…PKILYKRKGY (148 aa)) is the N-acetyltransferase domain. An acetyl-CoA-binding site is contributed by 93-106 (LYVDENSRVKGAGG).

This sequence belongs to the acetyltransferase family. GNAT subfamily. As to quaternary structure, forms homodimers in the absence, and homotetramers in the presence of acetyl-CoA. In terms of processing, autoacetylates in an intermolecular reaction.

It carries out the reaction L-lysyl-[protein] + acetyl-CoA = N(6)-acetyl-L-lysyl-[protein] + CoA + H(+). Its function is as follows. N-acetyltransferase that acetylates histone H3 at 'Lys-14' and histone H4 at 'Lys-5' and 'Lys-12'. Also acetylates polyamines like putrescine, spermidine and spermine, and certain other small basic proteins like nuclear HMG proteins. The chain is Histone acetyltransferase HPA2 from Saccharomyces cerevisiae (strain ATCC 204508 / S288c) (Baker's yeast).